The chain runs to 160 residues: Cytochrome b6-f complex subunit 4 (160 aa).

Transmembrane regions (helical) follow at residues 36–56 (LLYI…GLAV), 95–115 (LLGV…PFLE), and 131–151 (TVFL…ALPI).

Belongs to the cytochrome b family. PetD subfamily. In terms of assembly, the 4 large subunits of the cytochrome b6-f complex are cytochrome b6, subunit IV (17 kDa polypeptide, petD), cytochrome f and the Rieske protein, while the 4 small subunits are petG, petL, petM and petN. The complex functions as a dimer.

It localises to the plastid. It is found in the chloroplast thylakoid membrane. In terms of biological role, component of the cytochrome b6-f complex, which mediates electron transfer between photosystem II (PSII) and photosystem I (PSI), cyclic electron flow around PSI, and state transitions. The sequence is that of Cytochrome b6-f complex subunit 4 from Chara vulgaris (Common stonewort).